Consider the following 299-residue polypeptide: 4-diphosphocytidyl-2-C-methyl-D-erythritol kinase (299 aa).

Residue K33 is part of the active site. 115–125 (PLASGLGGGSS) provides a ligand contact to ATP. Residue D154 is part of the active site.

This sequence belongs to the GHMP kinase family. IspE subfamily.

The enzyme catalyses 4-CDP-2-C-methyl-D-erythritol + ATP = 4-CDP-2-C-methyl-D-erythritol 2-phosphate + ADP + H(+). It participates in isoprenoid biosynthesis; isopentenyl diphosphate biosynthesis via DXP pathway; isopentenyl diphosphate from 1-deoxy-D-xylulose 5-phosphate: step 3/6. In terms of biological role, catalyzes the phosphorylation of the position 2 hydroxy group of 4-diphosphocytidyl-2C-methyl-D-erythritol. The sequence is that of 4-diphosphocytidyl-2-C-methyl-D-erythritol kinase from Deinococcus geothermalis (strain DSM 11300 / CIP 105573 / AG-3a).